The chain runs to 525 residues: GMP synthase [glutamine-hydrolyzing] (525 aa).

In terms of domain architecture, Glutamine amidotransferase type-1 spans 12-203; that stretch reads TVLVVDFGAQ…LYRGAGLTPS (192 aa). Catalysis depends on C89, which acts as the Nucleophile. Active-site residues include H177 and E179. A GMPS ATP-PPase domain is found at 204-399; sequence WTTGNVIDEQ…LGLPDEIVQR (196 aa). Residue 231 to 237 participates in ATP binding; the sequence is SGGVDSA.

In terms of assembly, homodimer.

The catalysed reaction is XMP + L-glutamine + ATP + H2O = GMP + L-glutamate + AMP + diphosphate + 2 H(+). Its pathway is purine metabolism; GMP biosynthesis; GMP from XMP (L-Gln route): step 1/1. Catalyzes the synthesis of GMP from XMP. This is GMP synthase [glutamine-hydrolyzing] from Streptomyces avermitilis (strain ATCC 31267 / DSM 46492 / JCM 5070 / NBRC 14893 / NCIMB 12804 / NRRL 8165 / MA-4680).